Reading from the N-terminus, the 1031-residue chain is Formin-binding protein 4 (1031 aa).

Disordered stretches follow at residues 1–102 (MMGK…TTRP), 116–143 (AYAD…NQAT), and 166–205 (APVV…QTPG). Ser-19 carries the phosphoserine modification. 2 stretches are compositionally biased toward low complexity: residues 41-73 (DSTA…APED) and 83-92 (VVEVPNVVQN). A phosphoserine mark is found at Ser-120, Ser-125, and Ser-128. Residues 134 to 143 (SKEANGNQAT) show a composition bias toward polar residues. Residue Thr-176 is modified to Phosphothreonine. Residues 190–203 (LSPTASNGSDTAQT) are compositionally biased toward polar residues. The region spanning 218–252 (EIEMGDWQEVWDENTGCYYYWNTQTNEVTWELPQY) is the WW 1 domain. N6-acetyllysine is present on Lys-294. Lys-305 is covalently cross-linked (Glycyl lysine isopeptide (Lys-Gly) (interchain with G-Cter in SUMO1)). Lys-339 participates in a covalent cross-link: Glycyl lysine isopeptide (Lys-Gly) (interchain with G-Cter in SUMO2). Lys-352 is covalently cross-linked (Glycyl lysine isopeptide (Lys-Gly) (interchain with G-Cter in SUMO1); alternate). Residue Lys-352 forms a Glycyl lysine isopeptide (Lys-Gly) (interchain with G-Cter in SUMO2); alternate linkage. The segment at 355-518 (DPVSETKETS…KETEVEESSE (164 aa)) is disordered. Residues 400–414 (ESEEEEEEEEQDTLE) are compositionally biased toward acidic residues. Residues 418 to 430 (ALERKKAELRALE) show a composition bias toward basic and acidic residues. Ser-435, Ser-440, Ser-443, Ser-446, and Ser-450 each carry phosphoserine. Over residues 436 to 450 (VSGSSPRSDISQPAS) the composition is skewed to polar residues. The segment covering 457 to 466 (IMSKRGKWKM) has biased composition (basic residues). Over residues 469–482 (RATSPESTSRSSSK) the composition is skewed to low complexity. Ser-472, Ser-507, and Ser-516 each carry phosphoserine. Residues 499 to 518 (DSEKIDEISDKETEVEESSE) are compositionally biased toward basic and acidic residues. A Glycyl lysine isopeptide (Lys-Gly) (interchain with G-Cter in SUMO1); alternate cross-link involves residue Lys-527. A Glycyl lysine isopeptide (Lys-Gly) (interchain with G-Cter in SUMO2); alternate cross-link involves residue Lys-527. A WW 2 domain is found at 603–637 (NATPKGWSCHWDRDHRRYFYVNEQSGESQWEFPDG). Disordered stretches follow at residues 629-681 (ESQW…SLCK), 712-813 (PLPL…VQRS), and 900-994 (PAQA…RIEE). Residues 643-663 (SQTKEVRDESLPKLTVKDKTC) show a composition bias toward basic and acidic residues. Over residues 664–677 (TDPNSTESSENPTG) the composition is skewed to polar residues. A compositionally biased stretch (pro residues) spans 712–741 (PLPLEMPPPPPPPPESPPPPPPPPPPPPPL). A compositionally biased stretch (acidic residues) spans 742–757 (EDGEIQEVEMEDEGSE). A compositionally biased stretch (polar residues) spans 771–794 (KPSTQTTAVTSQSLVDSTASSPPS). Residues 913–939 (VEPPPPPPPPPTPTPPPPPPAPKVPPP) are compositionally biased toward pro residues. The span at 943 to 955 (RKGKKDKAKKSKT) shows a compositional bias: basic residues. Residues 971–984 (LDEEDNSSSSEEDR) show a composition bias toward acidic residues. 3 positions are modified to phosphoserine: Ser-977, Ser-978, and Ser-979. The span at 985–994 (ESTAQKRIEE) shows a compositional bias: basic and acidic residues.

Binds FMN1. Interacts with the Arg/Gly-rich-flanked Pro-rich regions of KHDRBS1/SAM68. Arginine methylation in these regions has no effect on this binding. Ubiquitous. Highest levels in spleen and thymus.

This is Formin-binding protein 4 (Fnbp4) from Mus musculus (Mouse).